Consider the following 334-residue polypeptide: Thiamine-binding periplasmic protein (334 aa).

The signal sequence occupies residues 1–23; that stretch reads MRLLSLLTFSLFAVIGLAPAAQA. Thiamine-binding positions include 64-65, 166-167, W202, and 220-223; these read DG, AT, and YTTS.

This sequence belongs to the bacterial solute-binding protein 1 family. As to quaternary structure, the complex is composed of two ATP-binding proteins (ThiQ), two transmembrane proteins (ThiP) and a solute-binding protein (ThiB).

It localises to the periplasm. Part of the ABC transporter complex ThiBPQ involved in thiamine import. This Brucella abortus biovar 1 (strain 9-941) protein is Thiamine-binding periplasmic protein (thiB).